The sequence spans 819 residues: MAACALFNGVGGGNTTPDETNNNSTSNSSNISTEDFHNMPQQQPHHSERKLLRKRMASEMELQLHNNNNNNDYHRFSRRTNNTSSLNCSLPATTQKGVTTTTTTTLASSGNNNNNNNNNNNYHYHNNNNNSIINNNNNNVALSRDNVAIQNFPTVTVTTNYSTMLLPSSCSSNLNNSSTSAANYTHYQQPLVEEQNTLPEICGFSGLPLFPSQNNQTNRTNNNSSNNRNNTNTVVDVVSSSPSMEETSATTNWIDGILKDLIHTSNSVSIPQLINNVREIIYPCNPNLALVLEHRLRLLTEPNTCVPERKRNSTEQSGVNVNGNVLAASNVNNSSVKLMNRVDDVVPTSLHFSDSSTLLNQNQNQNMFPNWGATQINNNNNPSVSLVTLPSQPLSTQQDQQHQLQQHPEDLAPATTTTTTSAELALARKKKEEIKEQKKKDEEGLHLLTLLLQCAEAVSAENLEQANKMLLEISQLSTPFGTSAQRVAAYFSEAISARLVSSCLGIYATLPVSSHTPHNQKVASAFQVFNGISPFVKFSHFTANQAIQEAFEREERVHIIDLDIMQGLQWPGLFHILASRPGGPPYVRLTGLGTSMETLEATGKRLSDFANKLGLPFEFFPVAEKVGNIDVEKLNVSKSEAVAVHWLQHSLYDVTGSDTNTLWLLQRLAPKVVTVVEQDLSNAGSFLGRFVEAIHYYSALFDSLGSSYGEESEERHVVEQQLLSREIRNVLAVGGPSRSGEIKFHNWREKLQQCGFRGVSLAGNAATQASLLLGMFPSEGYTLVEDNGILKLGWKDLCLLTASAWRPPYHTNTIIPHHN.

Disordered stretches follow at residues 6–49 (LFNG…HSER), 65–136 (HNNN…INNN), 212–231 (SQNN…RNNT), and 393–420 (PLST…TTTT). Low complexity predominate over residues 15-33 (TTPDETNNNSTSNSSNIST). Residues 79–98 (RTNNTSSLNCSLPATTQKGV) show a composition bias toward polar residues. The segment covering 99–136 (TTTTTTTLASSGNNNNNNNNNNNYHYHNNNNNSIINNN) has biased composition (low complexity). A coiled-coil region spans residues 418-448 (TTTSAELALARKKKEEIKEQKKKDEEGLHLL). The 369-residue stretch at 438 to 806 (KKKDEEGLHL…LCLLTASAWR (369 aa)) folds into the GRAS domain. The segment at 445–507 (LHLLTLLLQC…RLVSSCLGIY (63 aa)) is leucine repeat I (LRI). The short motif at 452–456 (LQCAE) is the LxCxE motif element. The segment at 526-591 (FQVFNGISPF…GGPPYVRLTG (66 aa)) is VHIID. Positions 557 to 561 (VHIID) match the VHIID motif. Residues 601–633 (ATGKRLSDFANKLGLPFEFFPVAEKVGNIDVEK) form a leucine repeat II (LRII) region. The segment at 642–729 (VAVHWLQHSL…QQLLSREIRN (88 aa)) is PFYRE. The interval 732 to 806 (AVGGPSRSGE…LCLLTASAWR (75 aa)) is SAW.

It belongs to the GRAS family. As to expression, expressed in shoot apical meristem, leaf primordia, between the cortex and the differentiating vessels in lower shoots and in root endodermis.

Its subcellular location is the nucleus. Putative transcription factor involved in asymmetric cell division. The sequence is that of Protein SCARECROW (SCR) from Pisum sativum (Garden pea).